A 113-amino-acid chain; its full sequence is Hydrogenase maturation factor HypA (113 aa).

His2 serves as a coordination point for Ni(2+). The Zn(2+) site is built by Cys73, Cys76, Cys89, and Cys92.

Belongs to the HypA/HybF family.

Its function is as follows. Involved in the maturation of [NiFe] hydrogenases. Required for nickel insertion into the metal center of the hydrogenase. In Beijerinckia indica subsp. indica (strain ATCC 9039 / DSM 1715 / NCIMB 8712), this protein is Hydrogenase maturation factor HypA.